A 447-amino-acid polypeptide reads, in one-letter code: Na(+)-translocating NADH-quinone reductase subunit A (447 aa).

Belongs to the NqrA family. As to quaternary structure, composed of six subunits; NqrA, NqrB, NqrC, NqrD, NqrE and NqrF.

The catalysed reaction is a ubiquinone + n Na(+)(in) + NADH + H(+) = a ubiquinol + n Na(+)(out) + NAD(+). NQR complex catalyzes the reduction of ubiquinone-1 to ubiquinol by two successive reactions, coupled with the transport of Na(+) ions from the cytoplasm to the periplasm. NqrA to NqrE are probably involved in the second step, the conversion of ubisemiquinone to ubiquinol. The sequence is that of Na(+)-translocating NADH-quinone reductase subunit A from Haemophilus influenzae (strain ATCC 51907 / DSM 11121 / KW20 / Rd).